A 1180-amino-acid chain; its full sequence is uncharacterized protein (1180 aa).

Disordered stretches follow at residues arginine 229 to isoleucine 280, lysine 431 to lysine 465, serine 484 to arginine 575, glycine 730 to threonine 758, glycine 810 to aspartate 986, arginine 1045 to methionine 1109, and glutamate 1125 to glutamate 1152. Positions glutamine 269–serine 279 are enriched in acidic residues. The span at lysine 431–alanine 443 shows a compositional bias: basic residues. Polar residues predominate over residues aspartate 486–proline 497. Residues serine 509 to serine 518 show a composition bias toward basic residues. Composition is skewed to basic and acidic residues over residues glycine 730–proline 745, serine 826–arginine 837, and threonine 846–lysine 856. Positions lysine 872 to glutamine 889 are enriched in basic residues. Over residues glutamine 937–methionine 959 the composition is skewed to polar residues. 3 stretches are compositionally biased toward basic and acidic residues: residues glutamate 960–aspartate 986, arginine 1045–glutamate 1106, and leucine 1127–glutamate 1152. The stretch at leucine 988–arginine 1171 forms a coiled coil.

This is an uncharacterized protein from Homo sapiens (Human).